The following is a 241-amino-acid chain: Spiralin (241 aa).

A signal peptide spans 1 to 23 (MKKLLSILAVFGVSAVGTTSVVA). Residue Cys-24 is the site of N-palmitoyl cysteine attachment. The S-diacylglycerol cysteine moiety is linked to residue Cys-24.

Belongs to the spiralin family. As to quaternary structure, seems to occur as dimer, tetramers, and large oligomers of identical chains. In terms of processing, palmitate and stearate are the major lipid components.

Its subcellular location is the cell membrane. Functionally, major membrane protein of spiroplasma. In Spiroplasma citri, this protein is Spiralin (spi).